The chain runs to 500 residues: Probable cytosol aminopeptidase (500 aa).

2 residues coordinate Mn(2+): lysine 264 and aspartate 269. The active site involves lysine 276. Positions 287, 346, and 348 each coordinate Mn(2+). Residue arginine 350 is part of the active site.

This sequence belongs to the peptidase M17 family. Mn(2+) is required as a cofactor.

It localises to the cytoplasm. The enzyme catalyses Release of an N-terminal amino acid, Xaa-|-Yaa-, in which Xaa is preferably Leu, but may be other amino acids including Pro although not Arg or Lys, and Yaa may be Pro. Amino acid amides and methyl esters are also readily hydrolyzed, but rates on arylamides are exceedingly low.. It carries out the reaction Release of an N-terminal amino acid, preferentially leucine, but not glutamic or aspartic acids.. Functionally, presumably involved in the processing and regular turnover of intracellular proteins. Catalyzes the removal of unsubstituted N-terminal amino acids from various peptides. The polypeptide is Probable cytosol aminopeptidase (Rickettsia canadensis (strain McKiel)).